A 358-amino-acid chain; its full sequence is MFKMVSSPHTHSGKLTAHIMLWVILAMMPAFFTQIYYFGFGVVLQSALAIGTAIIAEFIAIKLRGKKPLNYLSDFSVALTALILAMAIPPYAPYWVIIIGTLCAVLLGKQVYGGLGQNPFNPAMIGYVILLISFPLQMTTWMPPINLLQEPPTFSDAFSLIFSGLTTDGFTLSQLTHNIDGITQATPLDSAKIFYKSHTQLSDFYELIKLPIFMGNGTDFAQGWWQINVAFLAGGIFLILKRIIHWQIPVAMLVTFFCLATATAFTGFTHLSAISQLVSGAMMFGAFFIATDPVTASITPRGKIIFGALVGLFVYLIRYHGNYPDGVAFAILLSNICVPLIDHYTRPRVSGYPTKGRK.

Helical transmembrane passes span 19-39, 41-61, 79-99, and 125-145; these read IMLW…YYFG, GVVL…FIAI, LTAL…VIII, and IGYV…MPPI. Thr-186 bears the FMN phosphoryl threonine mark. 5 helical membrane passes run 220–240, 248–268, 271–291, 297–317, and 321–341; these read FAQG…FLIL, IPVA…FTGF, LSAI…FIAT, SITP…VYLI, and GNYP…VPLI.

The protein belongs to the NqrB/RnfD family. The complex is composed of six subunits: RnfA, RnfB, RnfC, RnfD, RnfE and RnfG. Requires FMN as cofactor.

Its subcellular location is the cell inner membrane. In terms of biological role, part of a membrane-bound complex that couples electron transfer with translocation of ions across the membrane. In Haemophilus influenzae (strain PittGG), this protein is Ion-translocating oxidoreductase complex subunit D.